Reading from the N-terminus, the 136-residue chain is MLQPKRTKFRKVHKGRNRGLAQGTDVSFGTFGLKAVGRGRLTARQIEAARRAMTRAVKRQGKIWIRVFPDKPITEKPLAVRMGKGKGNVEYWVALIQPGKVLYEMDGVPEELAREAFKLAAAKLPIKTTFVTKTVM.

It belongs to the universal ribosomal protein uL16 family. In terms of assembly, part of the 50S ribosomal subunit.

Binds 23S rRNA and is also seen to make contacts with the A and possibly P site tRNAs. The chain is Large ribosomal subunit protein uL16 from Edwardsiella ictaluri (strain 93-146).